Reading from the N-terminus, the 575-residue chain is DNA-directed RNA polymerase subunit beta' (575 aa).

It belongs to the RNA polymerase beta' chain family. In terms of assembly, in plastids the minimal PEP RNA polymerase catalytic core is composed of four subunits: alpha, beta, beta', and beta''. When a (nuclear-encoded) sigma factor is associated with the core the holoenzyme is formed, which can initiate transcription.

It is found in the plastid. The protein localises to the apicoplast. The catalysed reaction is RNA(n) + a ribonucleoside 5'-triphosphate = RNA(n+1) + diphosphate. Functionally, DNA-dependent RNA polymerase catalyzes the transcription of DNA into RNA using the four ribonucleoside triphosphates as substrates. The polypeptide is DNA-directed RNA polymerase subunit beta' (rpoC1) (Plasmodium falciparum (isolate 3D7)).